Reading from the N-terminus, the 76-residue chain is Exodeoxyribonuclease 7 small subunit (76 aa).

The protein belongs to the XseB family. In terms of assembly, heterooligomer composed of large and small subunits.

Its subcellular location is the cytoplasm. The enzyme catalyses Exonucleolytic cleavage in either 5'- to 3'- or 3'- to 5'-direction to yield nucleoside 5'-phosphates.. Functionally, bidirectionally degrades single-stranded DNA into large acid-insoluble oligonucleotides, which are then degraded further into small acid-soluble oligonucleotides. This is Exodeoxyribonuclease 7 small subunit from Staphylococcus epidermidis (strain ATCC 35984 / DSM 28319 / BCRC 17069 / CCUG 31568 / BM 3577 / RP62A).